Consider the following 292-residue polypeptide: RNA polymerase II transcriptional coactivator SUB1 (292 aa).

Disordered regions lie at residues 1-31 (MSYY…GGMP) and 117-292 (LLSD…SEEE). The segment covering 20–31 (LSNSNNNNGGMP) has biased composition (low complexity). At serine 119 the chain carries Phosphoserine. Basic and acidic residues-rich tracts occupy residues 133–166 (NNDK…LEPR), 179–191 (PHEE…EREA), 204–240 (KQQE…KIAE), and 251–267 (AKKE…KDAN). Serine 268, serine 269, and serine 289 each carry phosphoserine.

The protein belongs to the transcriptional coactivator PC4 family.

It is found in the nucleus. Functionally, plays a role in the release of TFIIB from the transcription complex during transcription initiation. Binds to TFIIB and specifically inhibits the formation of the TBP-TFIIB-promoter complexes. This Saccharomyces cerevisiae (strain ATCC 204508 / S288c) (Baker's yeast) protein is RNA polymerase II transcriptional coactivator SUB1 (SUB1).